The chain runs to 367 residues: Cycloaraneosene synthase sdnA (367 aa).

A signal peptide spans 1-24; that stretch reads MSLYGLFTLATSYLPSVGGGAALA. The Mg(2+) site is built by aspartate 115, asparagine 260, and serine 264. The DDXXD motif motif lies at 115-119; sequence DDQFD. Asparagine 276 carries an N-linked (GlcNAc...) asparagine glycan.

The protein belongs to the terpene synthase family. Mg(2+) is required as a cofactor.

It carries out the reaction (2E,6E,10E)-geranylgeranyl diphosphate = cycloaraneosene + diphosphate. Its pathway is antibiotic biosynthesis. In terms of biological role, cycloaraneosene synthase; part of the gene cluster that mediates the biosynthesis of sordarin and hypoxysordarin, glycoside antibiotics with a unique tetracyclic diterpene aglycone structure. First, the geranylgeranyl diphosphate synthase sdnC constructs GGDP from farnesyl diphosphate and isopentenyl diphosphate. The diterpene cyclase sdnA then catalyzes the cyclization of GGDP to afford cycloaraneosene. Cycloaraneosene is then hydroxylated four times by the putative cytochrome P450 monooxygenases sdnB, sdnE, sdnF and sdnH to give a hydroxylated cycloaraneosene derivative such as cycloaraneosene-8,9,13,19-tetraol. Although the order of the hydroxylations is unclear, at least C8, C9 and C13 of the cycloaraneosene skeleton are hydroxylated before the sordaricin formation. Dehydration of the 13-hydroxy group of the hydroxylated cycloaraneosene derivative might be catalyzed by an unassigned hypothetical protein such as sdnG and sdnP to construct the cyclopentadiene moiety. The FAD-dependent oxidoreductase sdnN is proposed to catalyze the oxidation at C9 of the hydroxylated cycloaraneosene derivative and also catalyze the Baeyer-Villiger oxidation to give the lactone intermediate. The presumed lactone intermediate would be hydrolyzed to give an acrolein moiety and a carboxylate moiety. Then, [4+2]cycloaddition would occur between the acrolein moiety and the cyclopentadiene moiety to give sordaricin. SdnN might also be involved in the [4+2]cycloaddition after the hypothesized oxidation to accommodate the oxidized product and prompt the [4+2]cycloaddition. GDP-6-deoxy-D-altrose may be biosynthesized from GDP-D-mannose by the putative GDP-mannose-4,6-dehydratase sdnI and the short-chain dehydrogenase sdnK. The glycosyltransferase sdnJ catalyzes the attachment of 6-deoxy-D-altrose onto the 19-hydroxy group of sordaricin to give 4'-O-demethylsordarin. The methyltransferase sdnD would complete the biosynthesis of sordarin. Sordarin can be further modified into hypoxysordarin. The unique acyl chain at the 3'-hydroxy group of hypoxysordarin would be constructed by an iterative type I PKS sdnO and the trans-acting polyketide methyltransferase sdnL. SdnL would be responsible for the introduction of an alpha-methyl group of the polyketide chain. Alternatively, the beta-lactamase-like protein sdnR might be responsible for the cleavage and transfer of the polyketide chain from the PKS sdnO to sordarin. Two putative cytochrome P450 monooxygenases, sdnQ and sdnT, might catalyze the epoxidations of the polyketide chain to complete the biosynthesis of hypoxysordarin. Transcriptional regulators sdnM and sdnS are presumably encoded for the transcriptional regulation of the expression of the sdn gene cluster. This chain is Cycloaraneosene synthase sdnA, found in Sordaria araneosa (Pleurage araneosa).